A 77-amino-acid chain; its full sequence is Putative regulatory protein tsl2331 (77 aa).

Belongs to the RemA family.

The chain is Putative regulatory protein tsl2331 from Thermosynechococcus vestitus (strain NIES-2133 / IAM M-273 / BP-1).